A 278-amino-acid chain; its full sequence is tRNA pseudouridine synthase A (278 aa).

The Nucleophile role is filled by aspartate 52. Tyrosine 111 serves as a coordination point for substrate. The segment covering 253–264 (AKAGPLEAAPLG) has biased composition (low complexity). The interval 253–278 (AKAGPLEAAPLGEAPLKEATLKEDWR) is disordered. Residues 267 to 278 (PLKEATLKEDWR) show a composition bias toward basic and acidic residues.

It belongs to the tRNA pseudouridine synthase TruA family. As to quaternary structure, homodimer.

It carries out the reaction uridine(38/39/40) in tRNA = pseudouridine(38/39/40) in tRNA. Formation of pseudouridine at positions 38, 39 and 40 in the anticodon stem and loop of transfer RNAs. The protein is tRNA pseudouridine synthase A of Rhodospirillum rubrum (strain ATCC 11170 / ATH 1.1.1 / DSM 467 / LMG 4362 / NCIMB 8255 / S1).